Reading from the N-terminus, the 540-residue chain is Chaperonin GroEL (540 aa).

ATP contacts are provided by residues 29 to 32 (TLGP), 86 to 90 (DGTTT), glycine 413, 476 to 478 (NAA), and aspartate 492.

Belongs to the chaperonin (HSP60) family. In terms of assembly, forms a cylinder of 14 subunits composed of two heptameric rings stacked back-to-back. Interacts with the co-chaperonin GroES.

It localises to the cytoplasm. It catalyses the reaction ATP + H2O + a folded polypeptide = ADP + phosphate + an unfolded polypeptide.. In terms of biological role, together with its co-chaperonin GroES, plays an essential role in assisting protein folding. The GroEL-GroES system forms a nano-cage that allows encapsulation of the non-native substrate proteins and provides a physical environment optimized to promote and accelerate protein folding. The protein is Chaperonin GroEL of Streptococcus gordonii.